We begin with the raw amino-acid sequence, 572 residues long: uncharacterized protein (572 aa).

Residues 13–45 (ALIAKPKGKTVSGDGADPKKRGRPKKNATEPAV) are disordered. The stretch at 177-204 (VLTKEMEEKLEALDRDMRTAEETKVSIA) forms a coiled coil.

This is an uncharacterized protein from Dryophytes versicolor (chameleon treefrog).